A 451-amino-acid polypeptide reads, in one-letter code: Bifunctional protein GlmU (451 aa).

The interval Met1–Arg230 is pyrophosphorylase. UDP-N-acetyl-alpha-D-glucosamine-binding positions include Leu10–Gly13, Lys24, Gln74, Gly79–Thr80, Tyr102–Asp104, Gly142, Glu156, Asn171, and Asn228. Asp104 serves as a coordination point for Mg(2+). Mg(2+) is bound at residue Asn228. Positions Ala231–Ala251 are linker. An N-acetyltransferase region spans residues Gly252–Lys451. The UDP-N-acetyl-alpha-D-glucosamine site is built by Arg317 and Lys335. The Proton acceptor role is filled by His347. Residues Tyr350 and Asn361 each coordinate UDP-N-acetyl-alpha-D-glucosamine. Acetyl-CoA contacts are provided by residues Ala364, Asn370–Tyr371, Ser389, Ala407, and Arg424.

It in the N-terminal section; belongs to the N-acetylglucosamine-1-phosphate uridyltransferase family. In the C-terminal section; belongs to the transferase hexapeptide repeat family. Homotrimer. Mg(2+) serves as cofactor.

It is found in the cytoplasm. The enzyme catalyses alpha-D-glucosamine 1-phosphate + acetyl-CoA = N-acetyl-alpha-D-glucosamine 1-phosphate + CoA + H(+). It catalyses the reaction N-acetyl-alpha-D-glucosamine 1-phosphate + UTP + H(+) = UDP-N-acetyl-alpha-D-glucosamine + diphosphate. Its pathway is nucleotide-sugar biosynthesis; UDP-N-acetyl-alpha-D-glucosamine biosynthesis; N-acetyl-alpha-D-glucosamine 1-phosphate from alpha-D-glucosamine 6-phosphate (route II): step 2/2. The protein operates within nucleotide-sugar biosynthesis; UDP-N-acetyl-alpha-D-glucosamine biosynthesis; UDP-N-acetyl-alpha-D-glucosamine from N-acetyl-alpha-D-glucosamine 1-phosphate: step 1/1. It functions in the pathway bacterial outer membrane biogenesis; LPS lipid A biosynthesis. Functionally, catalyzes the last two sequential reactions in the de novo biosynthetic pathway for UDP-N-acetylglucosamine (UDP-GlcNAc). The C-terminal domain catalyzes the transfer of acetyl group from acetyl coenzyme A to glucosamine-1-phosphate (GlcN-1-P) to produce N-acetylglucosamine-1-phosphate (GlcNAc-1-P), which is converted into UDP-GlcNAc by the transfer of uridine 5-monophosphate (from uridine 5-triphosphate), a reaction catalyzed by the N-terminal domain. The chain is Bifunctional protein GlmU from Sphingopyxis alaskensis (strain DSM 13593 / LMG 18877 / RB2256) (Sphingomonas alaskensis).